The sequence spans 65 residues: Photosystem II reaction center protein Z (65 aa).

2 helical membrane-spanning segments follow: residues 11-31 (LVLA…VIFA) and 44-64 (WLAC…DGIF).

It belongs to the PsbZ family. In terms of assembly, PSII is composed of 1 copy each of membrane proteins PsbA, PsbB, PsbC, PsbD, PsbE, PsbF, PsbH, PsbI, PsbJ, PsbK, PsbL, PsbM, PsbT, PsbY, PsbZ, Psb30/Ycf12, at least 3 peripheral proteins of the oxygen-evolving complex and a large number of cofactors. It forms dimeric complexes.

It localises to the plastid. It is found in the chloroplast thylakoid membrane. Its function is as follows. May control the interaction of photosystem II (PSII) cores with the light-harvesting antenna, regulates electron flow through the 2 photosystem reaction centers. PSII is a light-driven water plastoquinone oxidoreductase, using light energy to abstract electrons from H(2)O, generating a proton gradient subsequently used for ATP formation. In Euglena gracilis, this protein is Photosystem II reaction center protein Z.